Consider the following 379-residue polypeptide: Cobalt-precorrin-5B C(1)-methyltransferase (379 aa).

The protein belongs to the CbiD family.

The catalysed reaction is Co-precorrin-5B + S-adenosyl-L-methionine = Co-precorrin-6A + S-adenosyl-L-homocysteine. It participates in cofactor biosynthesis; adenosylcobalamin biosynthesis; cob(II)yrinate a,c-diamide from sirohydrochlorin (anaerobic route): step 6/10. Functionally, catalyzes the methylation of C-1 in cobalt-precorrin-5B to form cobalt-precorrin-6A. The chain is Cobalt-precorrin-5B C(1)-methyltransferase from Salmonella heidelberg (strain SL476).